The chain runs to 2514 residues: Highly reducing polyketide synthase sphB (2514 aa).

One can recognise a Ketosynthase family 3 (KS3) domain in the interval Q66–S486. Residues C238, H374, and H409 each act as for beta-ketoacyl synthase activity in the active site. In terms of domain architecture, Malonyl-CoA:ACP transacylase (MAT) spans M580–V904. Positions H950–P1079 are N-terminal hotdog fold. One can recognise a PKS/mFAS DH domain in the interval H950–A1240. H982 acts as the Proton acceptor; for dehydratase activity in catalysis. The interval P1089–A1240 is C-terminal hotdog fold. The active-site Proton donor; for dehydratase activity is the D1150. Residues W1319 to V1578 are methyltransferase (CMet) domain. An Enoyl reductase (ER) domain is found at G1779 to V2092. In terms of domain architecture, Ketoreductase (KR) spans A2120–E2297. The Carrier domain maps to E2427–V2504. S2464 bears the O-(pantetheine 4'-phosphoryl)serine mark.

Pantetheine 4'-phosphate is required as a cofactor.

It carries out the reaction holo-[ACP] + 8 malonyl-CoA + acetyl-CoA + 5 AH2 + 8 NADPH + 16 H(+) = (3R)-hydroxyoctadeca-4,10-dienoyl-[ACP] + 5 A + 8 CO2 + 8 NADP(+) + 9 CoA + 7 H2O. It participates in secondary metabolite biosynthesis. In terms of biological role, highly reducing polyketide synthase; part of the gene cluster that mediates the biosynthesis of sphingofungins, bioactive molecules acting as sphingolipid inhibitors via inhibiting serine palmitoyl transferase (SPT). Within the pathway, sphB catalyzes the first step of sphingofungin biosynthesis by condensing 8 units of malonyl-CoA with one starter unit of acetyl-CoA, leading to an C18 polyketide precursor 3-hydroxyoctadeca-4,10-dienoyl-ACP containing one delta-6 desaturation and one delta-12 desaturation. The PKS sphB does not contain any putative thioesterase domain for releasing the nascent polyketide chain and it has been suggested that aminoacyl transferases can facilitate the polyketide chain release. The aminoacyl transferase sphA uses the sphB product to produce 3-keto-presphingofungin by adding an aminomalonate molecule. SphF then reduces the C-3 ketone of 3-keto-presphingofungin which leads to presphingofungin. The cytochrome P450 monooxygenase sphH converts presphingofungin into sphingofungin B1 which is further converted to sphingofungin B by the dioxygenase sphC. SphC is also able to convert presphingofungin into sphingofungin B2. The acetyltransferase sphE acetylates sphingofungin B to produce sphingofungin C, but can also convert sphingofungin B1 into sphingofungin C1 and sphingofungin B2 into sphingofungin C2. Finally, sphingofungin C can be spontaneously converted into sphingofungin D. The chain is Highly reducing polyketide synthase sphB from Aspergillus fumigatus (strain CBS 144.89 / FGSC A1163 / CEA10) (Neosartorya fumigata).